Here is a 141-residue protein sequence, read N- to C-terminus: ATP synthase epsilon chain (141 aa).

The protein belongs to the ATPase epsilon chain family. As to quaternary structure, F-type ATPases have 2 components, CF(1) - the catalytic core - and CF(0) - the membrane proton channel. CF(1) has five subunits: alpha(3), beta(3), gamma(1), delta(1), epsilon(1). CF(0) has three main subunits: a, b and c.

Its subcellular location is the cell inner membrane. Produces ATP from ADP in the presence of a proton gradient across the membrane. The sequence is that of ATP synthase epsilon chain from Methylobacillus flagellatus (strain ATCC 51484 / DSM 6875 / VKM B-1610 / KT).